Here is a 380-residue protein sequence, read N- to C-terminus: Alkaline protease (380 aa).

The signal sequence occupies residues 1–27; that stretch reads MKKPLGKIVASTALLISVAFSSSIASA. The propeptide occupies 28–111; sequence AEEAKEKYLI…IEEDAEVTTM (84 aa). Residues 34-111 form the Inhibitor I9 domain; that stretch reads KYLIGFNEQE…IEEDAEVTTM (78 aa). Gln-113 serves as a coordination point for Ca(2+). Residues 116–379 form the Peptidase S8 domain; it reads PWGISRVQAP…SGLVNAEAAT (264 aa). Catalysis depends on Asp-143, which acts as the Charge relay system. Asp-151 contacts Ca(2+). His-173 functions as the Charge relay system in the catalytic mechanism. Ca(2+) is bound by residues Leu-184, Asn-186, Ile-188, Val-190, Ala-274, Tyr-276, and Ala-279. Catalysis depends on Ser-326, which acts as the Charge relay system.

This sequence belongs to the peptidase S8 family. Requires Ca(2+) as cofactor.

It is found in the secreted. The chain is Alkaline protease from Shouchella clausii (Alkalihalobacillus clausii).